Reading from the N-terminus, the 492-residue chain is PHO85 cyclin-8 (492 aa).

3 disordered regions span residues M1–S32, S143–R163, and K223–S252. Polar residues predominate over residues N8–M20. Positions F23–S32 are enriched in acidic residues. S32 carries the post-translational modification Phosphoserine.

This sequence belongs to the cyclin family. PHO80 subfamily. Forms a cyclin-CDK complex with PHO85.

It localises to the cytoplasm. It is found in the nucleus. Cyclin partner of the cyclin-dependent kinase (CDK) PHO85. Together with cyclin PCL10, negatively controls glycogen accumulation under favorable growth conditions. Involved in phosphorylation and negative regulation of glycogen synthase GSY2. Also has minor GLC8 kinase activity. The chain is PHO85 cyclin-8 (PCL8) from Saccharomyces cerevisiae (strain ATCC 204508 / S288c) (Baker's yeast).